We begin with the raw amino-acid sequence, 93 residues long: Small ribosomal subunit protein uS19 (93 aa).

The protein belongs to the universal ribosomal protein uS19 family.

Protein S19 forms a complex with S13 that binds strongly to the 16S ribosomal RNA. This Wolinella succinogenes (strain ATCC 29543 / DSM 1740 / CCUG 13145 / JCM 31913 / LMG 7466 / NCTC 11488 / FDC 602W) (Vibrio succinogenes) protein is Small ribosomal subunit protein uS19.